We begin with the raw amino-acid sequence, 188 residues long: Peroxidase B (188 aa).

The protein belongs to the peroxidase family. Post-translationally, partially N-glycosylated.

It localises to the secreted. The catalysed reaction is 2 a phenolic donor + H2O2 = 2 a phenolic radical donor + 2 H2O. This is Peroxidase B from Aloe vera (Aloe).